A 359-amino-acid polypeptide reads, in one-letter code: MPTYSKRKSRGSLEVSEKTNQPKFIKRSQSSETITSGETASELMQDEKEQSNGAVGSIEDEELQRLRENQASVEALSKKPESIDRELGVEALEIDNVVKSDEEKEDPNGASSKTVKARPLPAGSVHRVTTHMAPIPARSIGSHDTTTQRLIVVLDQACLEIYKVGKAKDAKYQLLNCDDHQGILKKLNRNIAQARPDITHQCLLTLLDSPLNKAGRLQVYIHTAKKVLIEVNPSVRIPRTFKRFSGLMVQLLHKLSIRSVNGNEKLLKVIKNPVTDYLPPNCRKATLSFDAPTVPPRKYLETLQPNQSVCIAIGAMAHGPDDFSDGWVDEKISISDYPLSASIACSKFLHSMEDFLGIV.

The span at 1–10 shows a compositional bias: basic residues; sequence MPTYSKRKSR. Disordered stretches follow at residues 1 to 62 and 98 to 118; these read MPTY…EDEE and VKSDEEKEDPNGASSKTVKAR. The residue at position 12 (S12) is a Phosphoserine. A compositionally biased stretch (polar residues) spans 18 to 39; it reads KTNQPKFIKRSQSSETITSGET. T33 is subject to Phosphothreonine. Residue S100 is modified to Phosphoserine. S-adenosyl-L-methionine contacts are provided by residues L287, G314, 319–321, and 334–339; these read GPD and ISDYPL.

Belongs to the class IV-like SAM-binding methyltransferase superfamily. RNA methyltransferase NEP1 family. As to quaternary structure, homodimer.

The protein localises to the nucleus. It is found in the nucleolus. The catalysed reaction is a pseudouridine in rRNA + S-adenosyl-L-methionine = an N(1)-methylpseudouridine in rRNA + S-adenosyl-L-homocysteine + H(+). Functionally, S-adenosyl-L-methionine-dependent pseudouridine N(1)-methyltransferase that methylates the pseudouridine corresponding to position 1189 (Psi1189) in S.cerevisiae 18S rRNA. Involved the biosynthesis of the hypermodified N1-methyl-N3-(3-amino-3-carboxypropyl) pseudouridine (m1acp3-Psi) conserved in eukaryotic 18S rRNA. Also has an essential role in 40S ribosomal subunit biogenesis independent on its methyltransferase activity, facilitating the incorporation of ribosomal protein S19 during the formation of pre-ribosomes. Essential for cell growth. It also has a key role in promoting the mating function. This is Ribosomal RNA small subunit methyltransferase mra1 from Schizosaccharomyces pombe (strain 972 / ATCC 24843) (Fission yeast).